The primary structure comprises 72 residues: Translation initiation factor IF-1 (72 aa).

Residues 1–72 (MAKEDNIEMQ…SKGRIVFRSR (72 aa)) form the S1-like domain.

Belongs to the IF-1 family. As to quaternary structure, component of the 30S ribosomal translation pre-initiation complex which assembles on the 30S ribosome in the order IF-2 and IF-3, IF-1 and N-formylmethionyl-tRNA(fMet); mRNA recruitment can occur at any time during PIC assembly.

The protein localises to the cytoplasm. In terms of biological role, one of the essential components for the initiation of protein synthesis. Stabilizes the binding of IF-2 and IF-3 on the 30S subunit to which N-formylmethionyl-tRNA(fMet) subsequently binds. Helps modulate mRNA selection, yielding the 30S pre-initiation complex (PIC). Upon addition of the 50S ribosomal subunit IF-1, IF-2 and IF-3 are released leaving the mature 70S translation initiation complex. The protein is Translation initiation factor IF-1 of Shewanella pealeana (strain ATCC 700345 / ANG-SQ1).